We begin with the raw amino-acid sequence, 436 residues long: DNA primase DnaG (436 aa).

A Toprim domain is found at 169–243 (DSIIVVEGRA…DIDYVARAPY (75 aa)). Glu-175, Asp-217, and Asp-219 together coordinate Mg(2+).

It belongs to the archaeal DnaG primase family. As to quaternary structure, forms a ternary complex with MCM helicase and DNA. Mg(2+) is required as a cofactor.

It carries out the reaction ssDNA + n NTP = ssDNA/pppN(pN)n-1 hybrid + (n-1) diphosphate.. Its function is as follows. RNA polymerase that catalyzes the synthesis of short RNA molecules used as primers for DNA polymerase during DNA replication. In Methanococcus maripaludis (strain DSM 14266 / JCM 13030 / NBRC 101832 / S2 / LL), this protein is DNA primase DnaG.